Reading from the N-terminus, the 82-residue chain is Defensin-like protein 75 (82 aa).

Positions 1 to 26 are cleaved as a signal peptide; that stretch reads MAKIKSLDVITVAIILLLVIADQATA. 4 disulfides stabilise this stretch: cysteine 33/cysteine 66, cysteine 37/cysteine 55, cysteine 41/cysteine 64, and cysteine 45/cysteine 65.

It belongs to the DEFL family.

It is found in the secreted. The sequence is that of Defensin-like protein 75 (LCR45) from Arabidopsis thaliana (Mouse-ear cress).